A 438-amino-acid polypeptide reads, in one-letter code: tRNA modification GTPase MnmE (438 aa).

The (6S)-5-formyl-5,6,7,8-tetrahydrofolate site is built by R21, E79, and K118. The TrmE-type G domain occupies 215–362 (GFSIVLIGAP…LEARIEQIVR (148 aa)). Position 225 (N225) interacts with K(+). Residues 225–230 (NAGKSS), 244–250 (TDIPGTT), and 269–272 (DTAG) each bind GTP. S229 is a binding site for Mg(2+). T244, I246, and T249 together coordinate K(+). T250 is a Mg(2+) binding site. K438 lines the (6S)-5-formyl-5,6,7,8-tetrahydrofolate pocket.

Belongs to the TRAFAC class TrmE-Era-EngA-EngB-Septin-like GTPase superfamily. TrmE GTPase family. As to quaternary structure, homodimer. Heterotetramer of two MnmE and two MnmG subunits. Requires K(+) as cofactor.

Its subcellular location is the cytoplasm. Functionally, exhibits a very high intrinsic GTPase hydrolysis rate. Involved in the addition of a carboxymethylaminomethyl (cmnm) group at the wobble position (U34) of certain tRNAs, forming tRNA-cmnm(5)s(2)U34. The sequence is that of tRNA modification GTPase MnmE from Maricaulis maris (strain MCS10) (Caulobacter maris).